Here is a 208-residue protein sequence, read N- to C-terminus: Small ribosomal subunit protein uS4 (208 aa).

The S4 RNA-binding domain occupies 98–160 (CRLDNVVYRM…AKKQSRIQLA (63 aa)).

The protein belongs to the universal ribosomal protein uS4 family. Part of the 30S ribosomal subunit. Contacts protein S5. The interaction surface between S4 and S5 is involved in control of translational fidelity.

Its function is as follows. One of the primary rRNA binding proteins, it binds directly to 16S rRNA where it nucleates assembly of the body of the 30S subunit. In terms of biological role, with S5 and S12 plays an important role in translational accuracy. This Ruthia magnifica subsp. Calyptogena magnifica protein is Small ribosomal subunit protein uS4.